The sequence spans 308 residues: Probable peptidyl-prolyl cis-trans isomerase B (308 aa).

Positions 74–123 (DHQSTTSATPTDSASTSPPQAATAPPLPPFKPSANLGANCQYPPSPDKAV) are disordered. A compositionally biased stretch (low complexity) spans 77 to 97 (STTSATPTDSASTSPPQAATA). In terms of domain architecture, PPIase cyclophilin-type spans 139 to 307 (AQVSVSMVTN…TEVTITSVLL (169 aa)).

It belongs to the cyclophilin-type PPIase family.

The enzyme catalyses [protein]-peptidylproline (omega=180) = [protein]-peptidylproline (omega=0). Functionally, PPIases accelerate the folding of proteins. It catalyzes the cis-trans isomerization of proline imidic peptide bonds in oligopeptides. The polypeptide is Probable peptidyl-prolyl cis-trans isomerase B (ppiB) (Mycobacterium tuberculosis (strain CDC 1551 / Oshkosh)).